A 513-amino-acid polypeptide reads, in one-letter code: ATP synthase subunit alpha (513 aa).

Residue 169-176 coordinates ATP; sequence GDRQTGKT.

It belongs to the ATPase alpha/beta chains family. F-type ATPases have 2 components, CF(1) - the catalytic core - and CF(0) - the membrane proton channel. CF(1) has five subunits: alpha(3), beta(3), gamma(1), delta(1), epsilon(1). CF(0) has three main subunits: a(1), b(2) and c(9-12). The alpha and beta chains form an alternating ring which encloses part of the gamma chain. CF(1) is attached to CF(0) by a central stalk formed by the gamma and epsilon chains, while a peripheral stalk is formed by the delta and b chains.

The protein localises to the cell inner membrane. It catalyses the reaction ATP + H2O + 4 H(+)(in) = ADP + phosphate + 5 H(+)(out). Produces ATP from ADP in the presence of a proton gradient across the membrane. The alpha chain is a regulatory subunit. The chain is ATP synthase subunit alpha from Vibrio cholerae serotype O1 (strain ATCC 39541 / Classical Ogawa 395 / O395).